Reading from the N-terminus, the 248-residue chain is Ribonuclease HII (248 aa).

An RNase H type-2 domain is found at 29 to 219 (DIVCGVDEAG…VREAHLRLGT (191 aa)). A divalent metal cation-binding residues include D35, E36, and D128.

It belongs to the RNase HII family. Requires Mn(2+) as cofactor. Mg(2+) serves as cofactor.

It is found in the cytoplasm. It catalyses the reaction Endonucleolytic cleavage to 5'-phosphomonoester.. In terms of biological role, endonuclease that specifically degrades the RNA of RNA-DNA hybrids. The polypeptide is Ribonuclease HII (Paraburkholderia xenovorans (strain LB400)).